A 109-amino-acid chain; its full sequence is Large ribosomal subunit protein uL23 (109 aa).

This sequence belongs to the universal ribosomal protein uL23 family. As to quaternary structure, part of the 50S ribosomal subunit. Contacts protein L29, and trigger factor when it is bound to the ribosome.

Functionally, one of the early assembly proteins it binds 23S rRNA. One of the proteins that surrounds the polypeptide exit tunnel on the outside of the ribosome. Forms the main docking site for trigger factor binding to the ribosome. The protein is Large ribosomal subunit protein uL23 of Chlorobium phaeobacteroides (strain BS1).